Here is a 149-residue protein sequence, read N- to C-terminus: UPF0179 protein Mbar_A0292 (149 aa).

The protein belongs to the UPF0179 family.

This Methanosarcina barkeri (strain Fusaro / DSM 804) protein is UPF0179 protein Mbar_A0292.